The chain runs to 491 residues: Cobyric acid synthase (491 aa).

Positions Lys246–Phe435 constitute a GATase cobBQ-type domain. The active-site Nucleophile is the Cys327. His427 is a catalytic residue.

This sequence belongs to the CobB/CobQ family. CobQ subfamily.

It participates in cofactor biosynthesis; adenosylcobalamin biosynthesis. In terms of biological role, catalyzes amidations at positions B, D, E, and G on adenosylcobyrinic A,C-diamide. NH(2) groups are provided by glutamine, and one molecule of ATP is hydrogenolyzed for each amidation. This chain is Cobyric acid synthase, found in Clostridium acetobutylicum (strain ATCC 824 / DSM 792 / JCM 1419 / IAM 19013 / LMG 5710 / NBRC 13948 / NRRL B-527 / VKM B-1787 / 2291 / W).